The sequence spans 160 residues: Small ribosomal subunit protein bS6 (160 aa).

2 stretches are compositionally biased toward basic and acidic residues: residues 94–119 and 125–152; these read EEHE…RGGR and RGDR…REDA. The disordered stretch occupies residues 94 to 160; the sequence is EEHEEGPSAM…DADTAAASEE (67 aa).

This sequence belongs to the bacterial ribosomal protein bS6 family.

Its function is as follows. Binds together with bS18 to 16S ribosomal RNA. The polypeptide is Small ribosomal subunit protein bS6 (Rhodopseudomonas palustris (strain BisB5)).